The chain runs to 33 residues: U1-pseudomyrmecitoxin-Pt1 subunit LS1 (33 aa).

Belongs to the myrmexin family. In terms of assembly, heterodimer composed of subunit LS1 and subunit SS1 (U1-PSDTX-Pt1b), heterodimer composed of subunit LS1 and SS2 (U1-PSDTX-Pt1b), and heterodimer composed of subunit LS1 and SS3; disulfide-linked. In terms of tissue distribution, expressed by the venom gland.

It localises to the secreted. Its function is as follows. This heterodimer may have anti-inflammatory properties, since the myrmexin complex (composed of 6 SS-LS heterodimers) inhibits carrageenin-induced edema in a dose-dependent manner (after subcutaneous injection into rats). This Pseudomyrmex triplarinus (Ant) protein is U1-pseudomyrmecitoxin-Pt1 subunit LS1.